A 270-amino-acid polypeptide reads, in one-letter code: 2-aminoethanethiol dioxygenase (270 aa).

Residues 21-48 (FRGSGGGRGASDRDAASGPEAPMQPGFP) are disordered. H112 and H114 together coordinate Fe cation. The segment at 140–164 (GGQRPRALPPEQQFEPPLQPREREA) is disordered. Residue H193 coordinates Fe cation. The 3'-(S-cysteinyl)-tyrosine (Cys-Tyr) cross-link spans 220–223 (CHYY).

In terms of assembly, monomer. The cofactor is Fe cation.

It carries out the reaction cysteamine + O2 = hypotaurine + H(+). It catalyses the reaction N-terminal L-cysteinyl-[protein] + O2 = N-terminal S-hydroxy-S-oxy-L-cysteinyl-[protein] + H(+). Plays a vital role in regulating thiol metabolism and preserving oxygen homeostasis by oxidizing the sulfur of cysteamine and N-terminal cysteine-containing proteins to their corresponding sulfinic acids using O2 as a cosubstrate. Catalyzes the oxidation of cysteamine (2-aminoethanethiol) to hypotaurine. Catalyzes the oxidation of regulators of G-protein signaling 4 (RGS4) and 5 (RGS5) and interleukin-32 (IL32). The sequence is that of 2-aminoethanethiol dioxygenase (ADO) from Homo sapiens (Human).